A 322-amino-acid polypeptide reads, in one-letter code: HPr kinase/phosphorylase (322 aa).

Catalysis depends on residues His-146 and Lys-167. ATP is bound at residue 161–168 (GDSGLGKS). Position 168 (Ser-168) interacts with Mg(2+). Asp-185 functions as the Proton acceptor; for phosphorylation activity. Proton donor; for dephosphorylation activity in the catalytic mechanism. An important for the catalytic mechanism of both phosphorylation and dephosphorylation region spans residues 209-218 (LEVRGLGLLD). Glu-210 contributes to the Mg(2+) binding site. Arg-250 is a catalytic residue. The segment at 271–276 (QVAAGR) is important for the catalytic mechanism of dephosphorylation.

This sequence belongs to the HPrK/P family. As to quaternary structure, homohexamer. Mg(2+) is required as a cofactor.

The enzyme catalyses [HPr protein]-L-serine + ATP = [HPr protein]-O-phospho-L-serine + ADP + H(+). It carries out the reaction [HPr protein]-O-phospho-L-serine + phosphate + H(+) = [HPr protein]-L-serine + diphosphate. Its function is as follows. Catalyzes the ATP- as well as the pyrophosphate-dependent phosphorylation of a specific serine residue in HPr, a phosphocarrier protein of the phosphoenolpyruvate-dependent sugar phosphotransferase system (PTS). HprK/P also catalyzes the pyrophosphate-producing, inorganic phosphate-dependent dephosphorylation (phosphorolysis) of seryl-phosphorylated HPr (P-Ser-HPr). The polypeptide is HPr kinase/phosphorylase (Paraburkholderia xenovorans (strain LB400)).